The sequence spans 958 residues: Probable protein phosphatase DDB_G0282105 (958 aa).

2 consecutive transmembrane segments (helical) span residues 2–22 (VLMM…SLMV) and 26–46 (FLEF…ILFF). Residues 142–330 (SASQQSELTN…KDKERERSSS (189 aa)) adopt a coiled-coil conformation. Residues 312–328 (QEKEKQKLEKDKERERS) show a composition bias toward basic and acidic residues. Disordered regions lie at residues 312 to 361 (QEKE…PIPI), 380 to 421 (SVNG…PKFK), 445 to 475 (HLGS…TTPI), 491 to 525 (ITSP…ILSP), and 619 to 659 (NNNN…NDNK). Composition is skewed to low complexity over residues 329–361 (SSFS…PIPI), 390–401 (SSVSPPSSSYLR), 452–475 (TPAN…TTPI), 491–515 (ITSP…SSSS), and 619–655 (NNNN…NNNK). A coiled-coil region spans residues 613 to 666 (NFLKTNNNNNKNNIEESNNNNNNNNNNNNNNNNNNNNNNNNNKNDNKEVNSKLE). The PPM-type phosphatase domain maps to 675-958 (KIGLRRAKKK…DNVTVIIVKL (284 aa)). Residues D722, G723, D905, and D949 each contribute to the Mn(2+) site.

It in the C-terminal section; belongs to the PP2C family. The cofactor is Mg(2+). It depends on Mn(2+) as a cofactor.

Its subcellular location is the membrane. It catalyses the reaction O-phospho-L-seryl-[protein] + H2O = L-seryl-[protein] + phosphate. The catalysed reaction is O-phospho-L-threonyl-[protein] + H2O = L-threonyl-[protein] + phosphate. The protein is Probable protein phosphatase DDB_G0282105 of Dictyostelium discoideum (Social amoeba).